The sequence spans 215 residues: Sodium channel regulatory subunit beta-3 (215 aa).

A signal peptide spans 1-24; the sequence is MPAFNRLLPLASLVLIYWVRVCFP. Residues 25-138 enclose the Ig-like C2-type domain; that stretch reads VCVEVPSETE…EAHRPFVKTT (114 aa). At 25–156 the chain is on the extracellular side; it reads VCVEVPSETE…EEAGEDFTSV (132 aa). Cystine bridges form between cysteine 26–cysteine 48 and cysteine 45–cysteine 120. N-linked (GlcNAc...) asparagine glycosylation is found at asparagine 95, asparagine 109, asparagine 113, and asparagine 121. The chain crosses the membrane as a helical span at residues 157 to 178; the sequence is VSEIMMYILLVFLTLWLFIEMI. At 179–215 the chain is on the cytoplasmic side; it reads YCYRKVSKAEEAAQENASDYLAIPSENKENSVVPVEE.

This sequence belongs to the sodium channel auxiliary subunit SCN3B (TC 8.A.17) family. A voltage-gated sodium (Nav) channel consists of an ion-conducting pore-forming alpha subunit functional on its own that is regulated by one or more beta subunits. Forms homodimers and homotrimers. SCN3B is non-covalently associated with alpha subunits and induces the formation of alpha subunit oligomers, including trimers. Interacts with SCN5A/Nav1.5; regulatory subunit of SCN5A/Nav1.5. Interacts with SCN7A/Nav2.1; probable regulatory subunit of SCN7A/Nav2.1. Interacts with SCN10A; regulatory subunit of SCN10A/Nav1.8. Interacts with NFASC; probably involved in targeting the sodium channels to the nodes of Ranvier. In terms of processing, intramolecular disulfide bonds favor the voltage-gated sodium channel oligomeric complex assembly. N-glycosylated.

It localises to the cell membrane. In terms of biological role, regulatory subunit of multiple voltage-gated sodium (Nav) channels directly mediating the depolarization of excitable membranes. Navs, also called VGSCs (voltage-gated sodium channels) or VDSCs (voltage-dependent sodium channels), operate by switching between closed and open conformations depending on the voltage difference across the membrane. In the open conformation they allow Na(+) ions to selectively pass through the pore, along their electrochemical gradient. The influx of Na+ ions provokes membrane depolarization, initiating the propagation of electrical signals throughout cells and tissues. The accessory beta subunits participate in localization and functional modulation of the Nav channels. Modulates the activity of SCN2A/Nav1.2, causing a hyperpolarizing shift in the voltage-dependence of inactivation of the channel and increasing the fraction of channels operating in the fast gating mode. Modulates the activity of SCN5A/Nav1.5. Could also regulate the atypical sodium channel SCN7A/Nav2.1. Modulates the activity of SCN10A/Nav1.8, regulating its oligomerization and accelerating the recovery from inactivation. The protein is Sodium channel regulatory subunit beta-3 of Mus musculus (Mouse).